The following is a 93-amino-acid chain: Large ribosomal subunit protein eL42 (93 aa).

Residues Cys11 and Cys14 each coordinate Zn(2+). The segment at 11-75 (CPNCDEHHQL…TDLKYRCSEC (65 aa)) adopts a C4-type zinc-finger fold. Residues 24–62 (KVRSGRSSGMKWDARRTKRANASIGNHGRFSKVPVGNKP) form a disordered region. Cys72 and Cys75 together coordinate Zn(2+).

The protein belongs to the eukaryotic ribosomal protein eL42 family. In terms of assembly, part of the 50S ribosomal subunit. Requires Zn(2+) as cofactor.

Binds to the 23S rRNA. The protein is Large ribosomal subunit protein eL42 of Halobacterium salinarum (strain ATCC 700922 / JCM 11081 / NRC-1) (Halobacterium halobium).